The chain runs to 205 residues: Peroxynitrite isomerase (205 aa).

A disordered region spans residues 1 to 23 (MTEPDPAAAEQRPSVGRNLPTFQ). Positions 52-58 (GVWRGEG) match the GXWXGXG motif. Heme b-binding residues include Thr63, Lys168, and His195.

It belongs to the nitrobindin family. Homodimer. The cofactor is heme b.

It catalyses the reaction peroxynitrite = nitrate. It participates in nitrogen metabolism. Its function is as follows. Heme-binding protein able to scavenge peroxynitrite and to protect free L-tyrosine against peroxynitrite-mediated nitration, by acting as a peroxynitrite isomerase that converts peroxynitrite to nitrate. Therefore, this protein likely plays a role in peroxynitrite sensing and in the detoxification of reactive nitrogen and oxygen species (RNS and ROS, respectively). Is able to bind nitric oxide (NO) in vitro, but may act as a sensor of peroxynitrite levels in vivo. This chain is Peroxynitrite isomerase, found in Mycobacteroides abscessus (strain ATCC 19977 / DSM 44196 / CCUG 20993 / CIP 104536 / JCM 13569 / NCTC 13031 / TMC 1543 / L948) (Mycobacterium abscessus).